Consider the following 797-residue polypeptide: Short transient receptor potential channel 4-associated protein (797 aa).

Alanine 2 bears the N-acetylalanine mark. The interaction with TNFRSF1A stretch occupies residues 2–400; the sequence is AAAPVAAGSG…VLYVLCVLLM (399 aa).

As to quaternary structure, component of the DCX(TRPC4AP) E3 ubiquitin ligase complex, at least composed of CUL4A, DDB1, TRPC4AP/TRUSS and RBX1. Interacts with MYC. Constitutively associated with TNFRSF1A. Directly interacts with TRADD, TRAF2, CHUK, IKBKB and IKBKG. Interacts with TRPC1, TRPC4 and TRPC5. (Microbial infection) Interacts with Hepatitis B virus (HBV) protein X; leading to prevent ubiquitination of TRPC4AP by SKP2. Phosphorylated by GSK3B; phosphorylation is required for ubiquitination. Post-translationally, ubiquitinated by a SCF (SKP1-CUL1-F-box protein) E3 ubiquitin-protein ligase containing SKP2, leading to its degradation. Phosphorylation by GSK3B is required for ubiquitination.

The protein localises to the cytoplasm. Its subcellular location is the perinuclear region. Its pathway is protein modification; protein ubiquitination. Substrate-recognition component of a DCX (DDB1-CUL4-X-box) E3 ubiquitin-protein ligase complex required for cell cycle control. The DCX(TRPC4AP) complex specifically mediates the polyubiquitination and subsequent degradation of MYC as part of the DesCEND (destruction via C-end degrons) pathway. The DesCEND (destruction via C-end degrons) pathway recognizes a C-degron located at the extreme C terminus of target proteins, leading to their ubiquitination and degradation. The DCX(TRPC4AP) complex specifically recognizes proteins with an arginine at the minus 3 position (R-3 motif) at the C-terminus, such as MYC, leading to their ubiquitination and degradation. Also participates in the activation of NFKB1 in response to ligation of TNFRSF1A, possibly by linking TNFRSF1A to the IKK signalosome. Involved in JNK activation via its interaction with TRAF2. Also involved in elevation of endoplasmic reticulum Ca(2+) storage reduction in response to CHRM1. The protein is Short transient receptor potential channel 4-associated protein of Homo sapiens (Human).